A 283-amino-acid chain; its full sequence is GDP-polyphosphate phosphotransferase (283 aa).

This sequence belongs to the polyphosphate kinase 2 (PPK2) family. Class I subfamily.

It catalyses the reaction [phosphate](n) + GTP = [phosphate](n+1) + GDP. Uses inorganic polyphosphate (polyP) as a donor to convert GDP to GTP. The chain is GDP-polyphosphate phosphotransferase from Mycolicibacterium smegmatis (strain ATCC 700084 / mc(2)155) (Mycobacterium smegmatis).